The chain runs to 527 residues: MLKASLLSFVAFTAQVAHAAFGITTSSSAYVIDTNAPNQLKFTVSRSSCDITSIIHYGTELQYSSQGSHIGSGLGSATVTATQSGDYIKVTCVTDTLTQYMVVHNGDPIIHMATYITAEPSIGELRFIARLNSDLLPNEEPFGDVSTTADGTAIEGSDVFLVGSETRSKFYSSERFIDDQRHCIAGDAHRVCMILNQYESSSGGPFHRDINSNNGGSYNALYWYMNSGHVQTESYRMGLHGPYSMYFSRSGTPSTSIDTSFFADLDIKGYVAASGRGKVAGTASGADSSMDWVVHWYNDAAQYWTYTSSSGSFTSPAMKPGTYTMVYYQGEYAVATSSVTVSAGSTTTKNISGSVKTGTTIFKIGEWDGQPTGFRNAANQLRMHPSDSRMSSWGPLTYTVGSSALTDFPMAVFKSVNNPVTIKFTATSAQTGAATLRIGTTLSFAGGRPQATINSYTGSAPAAPTNLDSRGVTRGAYRGLGEVYDVSIPSGTIVAGTNTITINVISGSSGDTYLSPNFIFDCVELFQ.

The signal sequence occupies residues 1 to 19 (MLKASLLSFVAFTAQVAHA). Disulfide bonds link cysteine 49–cysteine 92 and cysteine 183–cysteine 192. Asparagine 350 carries N-linked (GlcNAc...) asparagine glycosylation.

The protein belongs to the polysaccharide lyase 4 family.

Its subcellular location is the secreted. It catalyses the reaction Endotype eliminative cleavage of L-alpha-rhamnopyranosyl-(1-&gt;4)-alpha-D-galactopyranosyluronic acid bonds of rhamnogalacturonan I domains in ramified hairy regions of pectin leaving L-rhamnopyranose at the reducing end and 4-deoxy-4,5-unsaturated D-galactopyranosyluronic acid at the non-reducing end.. Pectinolytic enzyme that has a positive effect in the apple hot-mash liquefaction process. This endolyase hydrolyzes the alpha-L-rhamnopyranosyl-(1,4)-alpha-D-galacturonopyranosyl glycosidic linkage by beta-elimination, thereby generating oligosaccharides terminating at the non-reducing end with a hex-4-enopyranosyluronic acid residue. This Aspergillus aculeatus protein is Rhamnogalacturonate lyase A (rglA).